The following is a 314-amino-acid chain: WD repeat-containing protein 38 (314 aa).

7 WD repeats span residues 19–58, 61–100, 103–142, 145–184, 190–228, 231–272, and 274–312; these read QHGG…LLWR, GHTG…CLRV, GHQR…MLRL, GHRD…PAVS, GHSA…LLIQ, GHVT…ETLK, and VLDV…PRDP. The interval 294–314 is disordered; the sequence is AADQTRRQISRTSKSPRDPQT.

This is WD repeat-containing protein 38 (WDR38) from Homo sapiens (Human).